The sequence spans 372 residues: Glutamate 5-kinase (372 aa).

An ATP-binding site is contributed by K14. Substrate contacts are provided by S54, D141, and N153. 173 to 174 (TD) provides a ligand contact to ATP. A PUA domain is found at 280-358 (RGHVVIDDGA…GEIESVLGYM (79 aa)).

This sequence belongs to the glutamate 5-kinase family.

Its subcellular location is the cytoplasm. It carries out the reaction L-glutamate + ATP = L-glutamyl 5-phosphate + ADP. It functions in the pathway amino-acid biosynthesis; L-proline biosynthesis; L-glutamate 5-semialdehyde from L-glutamate: step 1/2. Catalyzes the transfer of a phosphate group to glutamate to form L-glutamate 5-phosphate. This chain is Glutamate 5-kinase, found in Paraburkholderia xenovorans (strain LB400).